Reading from the N-terminus, the 106-residue chain is Large ribosomal subunit protein P1 (106 aa).

Residues 69 to 106 (AAAAAPAEEAKEEAKEEEEEEEEVKEEEAIEGLGALFG) form a disordered region. A compositionally biased stretch (acidic residues) spans 83 to 98 (KEEEEEEEEVKEEEAI).

Belongs to the eukaryotic ribosomal protein P1/P2 family. In terms of assembly, part of the 50S ribosomal subunit. Homodimer, it forms part of the ribosomal stalk which helps the ribosome interact with GTP-bound translation factors. Forms a heptameric uL10/P0(P1)2(P1)2(P1)2 complex, where uL10/P0 forms an elongated spine to which the P1 dimers bind in a sequential fashion.

Functionally, forms part of the ribosomal stalk, playing a central role in the interaction of the ribosome with GTP-bound translation factors. The protein is Large ribosomal subunit protein P1 of Archaeoglobus fulgidus (strain ATCC 49558 / DSM 4304 / JCM 9628 / NBRC 100126 / VC-16).